The primary structure comprises 216 residues: MPTVLLTGFEPFEDEPINPSWEAVRALDGERVGDAVIVARQLPCVFGAAIDAIGELLDTLRPALVIAVGQAGGRAEMSVERVAINVDDARIADNAGAQPIDTAIVADGPAAYFATLPIKAMVRDMRAAGVPASVSQTAGTFVCNHVFYGLMHRLARHPAGTVRGGFIHIPYLPEQAARHPGQPSLALETLVKGLRTAVATALSTRADVREQGGQLH.

Active-site residues include E80, C143, and H168.

This sequence belongs to the peptidase C15 family. As to quaternary structure, homotetramer.

It is found in the cytoplasm. It catalyses the reaction Release of an N-terminal pyroglutamyl group from a polypeptide, the second amino acid generally not being Pro.. Removes 5-oxoproline from various penultimate amino acid residues except L-proline. This Cupriavidus taiwanensis (strain DSM 17343 / BCRC 17206 / CCUG 44338 / CIP 107171 / LMG 19424 / R1) (Ralstonia taiwanensis (strain LMG 19424)) protein is Pyrrolidone-carboxylate peptidase.